A 465-amino-acid polypeptide reads, in one-letter code: Adenosylhomocysteinase (465 aa).

Substrate-binding residues include Thr-56, Asp-131, and Glu-191. Residue 192 to 194 coordinates NAD(+); it reads TTT. The substrate site is built by Lys-221 and Asp-225. NAD(+) contacts are provided by residues Asn-226, 255–260, Glu-278, Asn-313, 334–336, and Asn-379; these read GYGDVG and IGH.

Belongs to the adenosylhomocysteinase family. NAD(+) serves as cofactor.

Its subcellular location is the cytoplasm. The enzyme catalyses S-adenosyl-L-homocysteine + H2O = L-homocysteine + adenosine. It functions in the pathway amino-acid biosynthesis; L-homocysteine biosynthesis; L-homocysteine from S-adenosyl-L-homocysteine: step 1/1. Its function is as follows. May play a key role in the regulation of the intracellular concentration of adenosylhomocysteine. This Chelativorans sp. (strain BNC1) protein is Adenosylhomocysteinase.